A 605-amino-acid chain; its full sequence is Xylan O-acetyltransferase 7 (605 aa).

Topologically, residues 1-124 (MKKKKNGMGA…AKQPSPRRTP (124 aa)) are cytoplasmic. The disordered stretch occupies residues 86–126 (PCHLLPIQGQGQMQMQQRRKPPPAAAPVAAKQPSPRRTPGP). The helical; Signal-anchor for type II membrane protein transmembrane segment at 125-145 (GPLSFAGALLSLLVVATFLYI) threads the bilayer. Topologically, residues 146–605 (NDHGNMMPPH…LYAHIVAHAA (460 aa)) are lumenal. N-linked (GlcNAc...) asparagine glycosylation is found at N192 and N218. Disulfide bonds link C243–C296, C267–C332, C276–C584, and C499–C580. Residues 319-321 (GDS) carry the GDS motif motif. S321 (nucleophile) is an active-site residue. 4 N-linked (GlcNAc...) asparagine glycosylation sites follow: N351, N363, N471, and N508. The active-site Proton donor is D579. Residues 579–582 (DCIH) carry the DXXH motif motif. H582 (proton acceptor) is an active-site residue.

The protein belongs to the PC-esterase family. TBL subfamily. Expressed in roots, leaves and stems.

It localises to the golgi apparatus membrane. Xylan acetyltransferase required for 2-O- and 3-O-monoacetylation of xylosyl residues in xylan. Catalyzes the 2-O-acetylation of xylan, followed by nonenzymatic acetyl migration to the O-3 position, resulting in products that are monoacetylated at both O-2 and O-3 positions. The polypeptide is Xylan O-acetyltransferase 7 (Oryza sativa subsp. japonica (Rice)).